Reading from the N-terminus, the 440-residue chain is Thymidine phosphorylase (440 aa).

The protein belongs to the thymidine/pyrimidine-nucleoside phosphorylase family. Homodimer.

It carries out the reaction thymidine + phosphate = 2-deoxy-alpha-D-ribose 1-phosphate + thymine. Its pathway is pyrimidine metabolism; dTMP biosynthesis via salvage pathway; dTMP from thymine: step 1/2. The enzymes which catalyze the reversible phosphorolysis of pyrimidine nucleosides are involved in the degradation of these compounds and in their utilization as carbon and energy sources, or in the rescue of pyrimidine bases for nucleotide synthesis. The protein is Thymidine phosphorylase of Escherichia coli O139:H28 (strain E24377A / ETEC).